The chain runs to 340 residues: Protein-arginine kinase (340 aa).

The 231-residue stretch at 14-244 folds into the Phosphagen kinase C-terminal domain; sequence IVITTRIRLA…EQIINQENLS (231 aa). Residues 17–21, His81, Arg115, 166–170, and 197–202 contribute to the ATP site; these read TTRIR, RASVM, and RGLWGE.

The protein belongs to the ATP:guanido phosphotransferase family.

The catalysed reaction is L-arginyl-[protein] + ATP = N(omega)-phospho-L-arginyl-[protein] + ADP + H(+). Catalyzes the specific phosphorylation of arginine residues in proteins. The sequence is that of Protein-arginine kinase from Clostridium acetobutylicum (strain ATCC 824 / DSM 792 / JCM 1419 / IAM 19013 / LMG 5710 / NBRC 13948 / NRRL B-527 / VKM B-1787 / 2291 / W).